We begin with the raw amino-acid sequence, 99 residues long: Ribonuclease P protein component 1 (99 aa).

The protein belongs to the eukaryotic/archaeal RNase P protein component 1 family. As to quaternary structure, consists of a catalytic RNA component and at least 4-5 protein subunits.

Its subcellular location is the cytoplasm. The catalysed reaction is Endonucleolytic cleavage of RNA, removing 5'-extranucleotides from tRNA precursor.. Functionally, part of ribonuclease P, a protein complex that generates mature tRNA molecules by cleaving their 5'-ends. This chain is Ribonuclease P protein component 1, found in Methanococcus vannielii.